The chain runs to 152 residues: Small ribosomal subunit protein uS13A (152 aa).

It belongs to the universal ribosomal protein uS13 family. In terms of assembly, component of the small ribosomal subunit (SSU). Mature yeast ribosomes consist of a small (40S) and a large (60S) subunit. The 40S small subunit contains 1 molecule of ribosomal RNA (18S rRNA) and at least 33 different proteins. The large 60S subunit contains 3 rRNA molecules (25S, 5.8S and 5S rRNA) and at least 46 different proteins.

It is found in the cytoplasm. Component of the ribosome, a large ribonucleoprotein complex responsible for the synthesis of proteins in the cell. The small ribosomal subunit (SSU) binds messenger RNAs (mRNAs) and translates the encoded message by selecting cognate aminoacyl-transfer RNA (tRNA) molecules. The large subunit (LSU) contains the ribosomal catalytic site termed the peptidyl transferase center (PTC), which catalyzes the formation of peptide bonds, thereby polymerizing the amino acids delivered by tRNAs into a polypeptide chain. The nascent polypeptides leave the ribosome through a tunnel in the LSU and interact with protein factors that function in enzymatic processing, targeting, and the membrane insertion of nascent chains at the exit of the ribosomal tunnel. The chain is Small ribosomal subunit protein uS13A (rps1801) from Schizosaccharomyces pombe (strain 972 / ATCC 24843) (Fission yeast).